We begin with the raw amino-acid sequence, 20 residues long: Trypsin inhibitor (20 aa).

A disordered region spans residues 1 to 20; that stretch reads APSDTTIAETLTITEEFFPD.

In terms of tissue distribution, hemolymph.

It localises to the secreted. The protein localises to the extracellular space. Inhibits trypsin stoichiometrically. Also inhibits chymotrypsin very weakly. This is Trypsin inhibitor from Mythimna unipuncta (Armyworm moth).